Consider the following 287-residue polypeptide: Energy-coupling factor transporter ATP-binding protein EcfA2 (287 aa).

The region spanning 3-245 (IKFENVSYVY…SEWLQKHHLA (243 aa)) is the ABC transporter domain. 40–47 (GHTGSGKS) serves as a coordination point for ATP.

Belongs to the ABC transporter superfamily. Energy-coupling factor EcfA family. In terms of assembly, forms a stable energy-coupling factor (ECF) transporter complex composed of 2 membrane-embedded substrate-binding proteins (S component), 2 ATP-binding proteins (A component) and 2 transmembrane proteins (T component).

The protein resides in the cell membrane. In terms of biological role, ATP-binding (A) component of a common energy-coupling factor (ECF) ABC-transporter complex. Unlike classic ABC transporters this ECF transporter provides the energy necessary to transport a number of different substrates. This chain is Energy-coupling factor transporter ATP-binding protein EcfA2, found in Lactobacillus delbrueckii subsp. bulgaricus (strain ATCC 11842 / DSM 20081 / BCRC 10696 / JCM 1002 / NBRC 13953 / NCIMB 11778 / NCTC 12712 / WDCM 00102 / Lb 14).